The sequence spans 538 residues: Inositol-3-phosphate synthase (538 aa).

26 residues coordinate NAD(+): G74, G75, N76, N77, D150, S186, V187, Q197, D198, R200, T247, A248, N249, T250, G298, S299, D323, S326, N357, N358, D359, K372, G412, D413, D441, and S442.

This sequence belongs to the myo-inositol 1-phosphate synthase family. Homotetramer. It depends on NAD(+) as a cofactor.

It localises to the cytoplasm. The enzyme catalyses D-glucose 6-phosphate = 1D-myo-inositol 3-phosphate. Its pathway is polyol metabolism; myo-inositol biosynthesis; myo-inositol from D-glucose 6-phosphate: step 1/2. In terms of biological role, key enzyme in myo-inositol biosynthesis pathway that catalyzes the conversion of glucose 6-phosphate to 1-myo-inositol 1-phosphate in a NAD-dependent manner. Rate-limiting enzyme in the synthesis of all inositol-containing compounds. This Candida glabrata (strain ATCC 2001 / BCRC 20586 / JCM 3761 / NBRC 0622 / NRRL Y-65 / CBS 138) (Yeast) protein is Inositol-3-phosphate synthase (INO1).